A 707-amino-acid polypeptide reads, in one-letter code: Ribosomal RNA large subunit methyltransferase K/L (707 aa).

A THUMP domain is found at 44-155 (VIYNLCLWSR…NDILTVSFDL (112 aa)).

It belongs to the methyltransferase superfamily. RlmKL family.

It localises to the cytoplasm. The enzyme catalyses guanosine(2445) in 23S rRNA + S-adenosyl-L-methionine = N(2)-methylguanosine(2445) in 23S rRNA + S-adenosyl-L-homocysteine + H(+). It carries out the reaction guanosine(2069) in 23S rRNA + S-adenosyl-L-methionine = N(2)-methylguanosine(2069) in 23S rRNA + S-adenosyl-L-homocysteine + H(+). Its function is as follows. Specifically methylates the guanine in position 2445 (m2G2445) and the guanine in position 2069 (m7G2069) of 23S rRNA. This Legionella pneumophila (strain Paris) protein is Ribosomal RNA large subunit methyltransferase K/L.